Here is a 525-residue protein sequence, read N- to C-terminus: GMP synthase [glutamine-hydrolyzing] (525 aa).

The Glutamine amidotransferase type-1 domain occupies 9-207; it reads KILILDFGSQ…IVDICGCDTL (199 aa). The active-site Nucleophile is the Cys86. Catalysis depends on residues His181 and Glu183. A GMPS ATP-PPase domain is found at 208–400; it reads WTPANIAQDA…LGLPYDMVYR (193 aa). 235–241 lines the ATP pocket; that stretch reads SGGVDSS.

In terms of assembly, homodimer.

The catalysed reaction is XMP + L-glutamine + ATP + H2O = GMP + L-glutamate + AMP + diphosphate + 2 H(+). The protein operates within purine metabolism; GMP biosynthesis; GMP from XMP (L-Gln route): step 1/1. Its function is as follows. Catalyzes the synthesis of GMP from XMP. The sequence is that of GMP synthase [glutamine-hydrolyzing] from Marinomonas sp. (strain MWYL1).